The following is a 380-amino-acid chain: Cytochrome b (380 aa).

The next 4 helical transmembrane spans lie at 33–53 (FGSL…FLAM), 77–98 (WLLR…YLHI), 113–133 (WNIG…GYVL), and 178–198 (FFTF…LHLL). Residues His-83 and His-97 each contribute to the heme b site. Heme b contacts are provided by His-182 and His-196. His-201 serves as a coordination point for a ubiquinone. A run of 4 helical transmembrane segments spans residues 226–246 (YKDL…ALLN), 288–308 (LGGV…PVLH), 320–340 (PSQT…WIGG), and 347–367 (FIII…ILIP).

This sequence belongs to the cytochrome b family. In terms of assembly, the cytochrome bc1 complex contains 3 respiratory subunits (MT-CYB, CYC1 and UQCRFS1), 2 core proteins (UQCRC1 and UQCRC2) and probably 6 low-molecular weight proteins. Requires heme b as cofactor.

Its subcellular location is the mitochondrion inner membrane. In terms of biological role, component of the ubiquinol-cytochrome c reductase complex (complex III or cytochrome b-c1 complex) that is part of the mitochondrial respiratory chain. The b-c1 complex mediates electron transfer from ubiquinol to cytochrome c. Contributes to the generation of a proton gradient across the mitochondrial membrane that is then used for ATP synthesis. This chain is Cytochrome b (mt-cyb), found in Atractosteus spatula (Alligator gar).